The primary structure comprises 197 residues: Imidazoleglycerol-phosphate dehydratase (197 aa).

The protein belongs to the imidazoleglycerol-phosphate dehydratase family.

It is found in the cytoplasm. The enzyme catalyses D-erythro-1-(imidazol-4-yl)glycerol 3-phosphate = 3-(imidazol-4-yl)-2-oxopropyl phosphate + H2O. It participates in amino-acid biosynthesis; L-histidine biosynthesis; L-histidine from 5-phospho-alpha-D-ribose 1-diphosphate: step 6/9. The sequence is that of Imidazoleglycerol-phosphate dehydratase from Azorhizobium caulinodans (strain ATCC 43989 / DSM 5975 / JCM 20966 / LMG 6465 / NBRC 14845 / NCIMB 13405 / ORS 571).